Consider the following 152-residue polypeptide: 3-dehydroquinate dehydratase (152 aa).

Tyr-26 functions as the Proton acceptor in the catalytic mechanism. Substrate is bound by residues Asn-77, His-83, and Asp-90. His-103 (proton donor) is an active-site residue. Substrate-binding positions include 104-105 and Arg-114; that span reads LS.

This sequence belongs to the type-II 3-dehydroquinase family. As to quaternary structure, homododecamer.

The enzyme catalyses 3-dehydroquinate = 3-dehydroshikimate + H2O. The protein operates within metabolic intermediate biosynthesis; chorismate biosynthesis; chorismate from D-erythrose 4-phosphate and phosphoenolpyruvate: step 3/7. In terms of biological role, catalyzes a trans-dehydration via an enolate intermediate. The chain is 3-dehydroquinate dehydratase from Tolumonas auensis (strain DSM 9187 / NBRC 110442 / TA 4).